We begin with the raw amino-acid sequence, 104 residues long: Large ribosomal subunit protein uL24 (104 aa).

A compositionally biased stretch (basic and acidic residues) spans 82 to 92; it reads RIGYRTDENGK. The disordered stretch occupies residues 82–104; that stretch reads RIGYRTDENGKRVRISRRNGKDI. Over residues 93-104 the composition is skewed to basic residues; the sequence is RVRISRRNGKDI.

The protein belongs to the universal ribosomal protein uL24 family. Part of the 50S ribosomal subunit.

One of two assembly initiator proteins, it binds directly to the 5'-end of the 23S rRNA, where it nucleates assembly of the 50S subunit. Its function is as follows. One of the proteins that surrounds the polypeptide exit tunnel on the outside of the subunit. The sequence is that of Large ribosomal subunit protein uL24 from Nocardia farcinica (strain IFM 10152).